A 190-amino-acid polypeptide reads, in one-letter code: Threonylcarbamoyl-AMP synthase (190 aa).

In terms of domain architecture, YrdC-like spans 7–190 (TGSIAAAVDL…ALTGELFRQG (184 aa)).

The protein belongs to the SUA5 family. TsaC subfamily.

The protein localises to the cytoplasm. It catalyses the reaction L-threonine + hydrogencarbonate + ATP = L-threonylcarbamoyladenylate + diphosphate + H2O. Its function is as follows. Required for the formation of a threonylcarbamoyl group on adenosine at position 37 (t(6)A37) in tRNAs that read codons beginning with adenine. Catalyzes the conversion of L-threonine, HCO(3)(-)/CO(2) and ATP to give threonylcarbamoyl-AMP (TC-AMP) as the acyladenylate intermediate, with the release of diphosphate. This is Threonylcarbamoyl-AMP synthase from Salmonella arizonae (strain ATCC BAA-731 / CDC346-86 / RSK2980).